A 596-amino-acid polypeptide reads, in one-letter code: NADH-quinone oxidoreductase subunit C/D (596 aa).

Residues 1–186 (MMNDNKYIHI…PAFTLTRKKE (186 aa)) are NADH dehydrogenase I subunit C. The segment at 210–596 (DFMFLNLGPN…IDFVMSDVDR (387 aa)) is NADH dehydrogenase I subunit D.

The protein in the N-terminal section; belongs to the complex I 30 kDa subunit family. It in the C-terminal section; belongs to the complex I 49 kDa subunit family. NDH-1 is composed of 13 different subunits. Subunits NuoB, CD, E, F, and G constitute the peripheral sector of the complex.

The protein localises to the cell inner membrane. The catalysed reaction is a quinone + NADH + 5 H(+)(in) = a quinol + NAD(+) + 4 H(+)(out). Its function is as follows. NDH-1 shuttles electrons from NADH, via FMN and iron-sulfur (Fe-S) centers, to quinones in the respiratory chain. The immediate electron acceptor for the enzyme in this species is believed to be ubiquinone. Couples the redox reaction to proton translocation (for every two electrons transferred, four hydrogen ions are translocated across the cytoplasmic membrane), and thus conserves the redox energy in a proton gradient. This is NADH-quinone oxidoreductase subunit C/D from Blochmanniella floridana.